We begin with the raw amino-acid sequence, 315 residues long: Holliday junction branch migration complex subunit RuvB (315 aa).

Residues 1 to 168 (MAKKQEIRPK…FGLIGQISNY (168 aa)) form a large ATPase domain (RuvB-L) region. ATP contacts are provided by residues I7, R8, G49, K52, T53, S54, 115–117 (EDF), R158, Y168, and R205. Mg(2+) is bound at residue T53. The segment at 169–239 (QVEDIEKIIK…LVNKTLKQLG (71 aa)) is small ATPAse domain (RuvB-S). The head domain (RuvB-H) stretch occupies residues 242 to 315 (ENGLNESQVK…QKGISYLERI (74 aa)). DNA contacts are provided by K297 and R302.

Belongs to the RuvB family. In terms of assembly, homohexamer. Forms an RuvA(8)-RuvB(12)-Holliday junction (HJ) complex. HJ DNA is sandwiched between 2 RuvA tetramers; dsDNA enters through RuvA and exits via RuvB. An RuvB hexamer assembles on each DNA strand where it exits the tetramer. Each RuvB hexamer is contacted by two RuvA subunits (via domain III) on 2 adjacent RuvB subunits; this complex drives branch migration. In the full resolvosome a probable DNA-RuvA(4)-RuvB(12)-RuvC(2) complex forms which resolves the HJ.

It localises to the cytoplasm. The catalysed reaction is ATP + H2O = ADP + phosphate + H(+). Functionally, the RuvA-RuvB-RuvC complex processes Holliday junction (HJ) DNA during genetic recombination and DNA repair, while the RuvA-RuvB complex plays an important role in the rescue of blocked DNA replication forks via replication fork reversal (RFR). RuvA specifically binds to HJ cruciform DNA, conferring on it an open structure. The RuvB hexamer acts as an ATP-dependent pump, pulling dsDNA into and through the RuvAB complex. RuvB forms 2 homohexamers on either side of HJ DNA bound by 1 or 2 RuvA tetramers; 4 subunits per hexamer contact DNA at a time. Coordinated motions by a converter formed by DNA-disengaged RuvB subunits stimulates ATP hydrolysis and nucleotide exchange. Immobilization of the converter enables RuvB to convert the ATP-contained energy into a lever motion, pulling 2 nucleotides of DNA out of the RuvA tetramer per ATP hydrolyzed, thus driving DNA branch migration. The RuvB motors rotate together with the DNA substrate, which together with the progressing nucleotide cycle form the mechanistic basis for DNA recombination by continuous HJ branch migration. Branch migration allows RuvC to scan DNA until it finds its consensus sequence, where it cleaves and resolves cruciform DNA. The protein is Holliday junction branch migration complex subunit RuvB of Mycoplasmopsis pulmonis (strain UAB CTIP) (Mycoplasma pulmonis).